A 1611-amino-acid chain; its full sequence is Pentafunctional AROM polypeptide (1611 aa).

Residues 1–391 (MSSSSADVLK…YEEKASVVAD (391 aa)) form a 3-dehydroquinate synthase region. NAD(+)-binding positions include 47 to 49 (DTN), 84 to 87 (EGAK), 115 to 117 (GGV), and Asp120. A 7-phospho-2-dehydro-3-deoxy-D-arabino-heptonate-binding site is contributed by Arg131. 140 to 141 (TT) contacts NAD(+). Residues Asp147 and Lys153 each contribute to the 7-phospho-2-dehydro-3-deoxy-D-arabino-heptonate site. Lys162 is an NAD(+) binding site. A 7-phospho-2-dehydro-3-deoxy-D-arabino-heptonate-binding site is contributed by Asn163. NAD(+)-binding positions include 180 to 183 (FLTT) and Asn191. Glu195 lines the Zn(2+) pocket. 7-phospho-2-dehydro-3-deoxy-D-arabino-heptonate-binding positions include 195-198 (EVIK) and Lys257. Residue Glu267 is the Proton acceptor; for 3-dehydroquinate synthase activity of the active site. 7-phospho-2-dehydro-3-deoxy-D-arabino-heptonate-binding positions include 271–275 (RNLVN) and His278. His278 is a Zn(2+) binding site. The Proton acceptor; for 3-dehydroquinate synthase activity role is filled by His282. His294 and Lys363 together coordinate 7-phospho-2-dehydro-3-deoxy-D-arabino-heptonate. His294 contacts Zn(2+). The interval 404–863 (VKAATPTKSP…WDDLQNKIGV (460 aa)) is EPSP synthase. Catalysis depends on Cys845, which acts as the For EPSP synthase activity. The interval 892-1093 (DRPIFLIGMR…SVGNPTSFLS (202 aa)) is shikimate kinase. 899–906 (GMRGAGKT) contacts ATP. The 3-dehydroquinase stretch occupies residues 1094–1318 (LTFPDVTPAL…AAPGQLTARE (225 aa)). The active-site Proton acceptor; for 3-dehydroquinate dehydratase activity is the His1220. Lys1248 acts as the Schiff-base intermediate with substrate; for 3-dehydroquinate dehydratase activity in catalysis. The segment at 1331–1611 (AKKFVLFGSP…RKAVLDKYFA (281 aa)) is shikimate dehydrogenase.

In the N-terminal section; belongs to the sugar phosphate cyclases superfamily. Dehydroquinate synthase family. This sequence in the 2nd section; belongs to the EPSP synthase family. The protein in the 3rd section; belongs to the shikimate kinase family. It in the 4th section; belongs to the type-I 3-dehydroquinase family. In the C-terminal section; belongs to the shikimate dehydrogenase family. Homodimer. Zn(2+) is required as a cofactor.

Its subcellular location is the cytoplasm. It carries out the reaction 7-phospho-2-dehydro-3-deoxy-D-arabino-heptonate = 3-dehydroquinate + phosphate. The catalysed reaction is 3-dehydroquinate = 3-dehydroshikimate + H2O. The enzyme catalyses shikimate + NADP(+) = 3-dehydroshikimate + NADPH + H(+). It catalyses the reaction shikimate + ATP = 3-phosphoshikimate + ADP + H(+). It carries out the reaction 3-phosphoshikimate + phosphoenolpyruvate = 5-O-(1-carboxyvinyl)-3-phosphoshikimate + phosphate. Its pathway is metabolic intermediate biosynthesis; chorismate biosynthesis; chorismate from D-erythrose 4-phosphate and phosphoenolpyruvate: step 2/7. The protein operates within metabolic intermediate biosynthesis; chorismate biosynthesis; chorismate from D-erythrose 4-phosphate and phosphoenolpyruvate: step 3/7. It participates in metabolic intermediate biosynthesis; chorismate biosynthesis; chorismate from D-erythrose 4-phosphate and phosphoenolpyruvate: step 4/7. It functions in the pathway metabolic intermediate biosynthesis; chorismate biosynthesis; chorismate from D-erythrose 4-phosphate and phosphoenolpyruvate: step 5/7. Its pathway is metabolic intermediate biosynthesis; chorismate biosynthesis; chorismate from D-erythrose 4-phosphate and phosphoenolpyruvate: step 6/7. Its function is as follows. The AROM polypeptide catalyzes 5 consecutive enzymatic reactions in prechorismate polyaromatic amino acid biosynthesis. The chain is Pentafunctional AROM polypeptide from Cryptococcus neoformans var. neoformans serotype D (strain B-3501A) (Filobasidiella neoformans).